Consider the following 96-residue polypeptide: MLRLDLQFFASKKGVGSTKNGRDSQSKRLGAKRADGQTVTGGSILYRQRGTKIYPGVNVGRGGDDTLYAKVDGVVRFERLGRDRKQVSVYPVAQEA.

The propeptide occupies 1 to 9 (MLRLDLQFF). Residues 13 to 35 (KGVGSTKNGRDSQSKRLGAKRAD) form a disordered region.

The protein belongs to the bacterial ribosomal protein bL27 family. The N-terminus is cleaved by ribosomal processing cysteine protease Prp.

The protein is Large ribosomal subunit protein bL27 of Bacillus cereus (strain B4264).